A 546-amino-acid polypeptide reads, in one-letter code: MTPGELRRLYFIIHTFLSYGLDELIPKMRITLPLRIWRRMLFWMPNRHQDQPLGARLRLALQELGPVWIKFGQMLSTRRDLFPPHIADQLALLQDRVAPFEGKLAQQQIEKAMGGLPVETWFDDFSVEPLASASIAQVHTARLKENGKEVVIKVIRPDILPIIKADMKLIYRLARWVPRLLPDGRRLRPQEVVREYEKTLLDELNLLRESANAIQLRRNFEDSPMLYVPEVYPDYCSESMMVMERIYGIPVSDVEALEAQGTNMQLLAERGVQVFFTQVFRDSFFHADMHPGNIFVSYEHPEDPQYIGIDCGIVGSLNKEDKRYLAENFIAFFNRDYRKVAELHVDSGWVPPDTNVEEFEFAIRTVCEPIFEKPLAEISFGHVLLNLFNTARRFNMEVQPQLVLLQKTLLYVEGVGRQLYPQLDLWKTAKPFLESWIKDQVGIPALVRAFKDKAPFWIERMPEIPELVYQSLQQSKQLQTSVDTIVRDMRVRHVRQGQSRYLFGIGAVLLLSGTLLFIHRPEWGMMPGWLMAGGVVTWLIGWRKTH.

In terms of domain architecture, Protein kinase spans 124–502; it reads DFSVEPLASA…HVRQGQSRYL (379 aa). ATP is bound by residues 130–138 and Lys-153; that span reads LASASIAQV. Asp-288 acts as the Proton acceptor in catalysis. 2 consecutive transmembrane segments (helical) span residues 501–521 and 522–542; these read YLFG…IHRP and EWGM…LIGW.

This sequence belongs to the ABC1 family. UbiB subfamily.

The protein resides in the cell inner membrane. The protein operates within cofactor biosynthesis; ubiquinone biosynthesis [regulation]. In terms of biological role, is probably a protein kinase regulator of UbiI activity which is involved in aerobic coenzyme Q (ubiquinone) biosynthesis. This chain is Probable protein kinase UbiB, found in Klebsiella pneumoniae subsp. pneumoniae (strain ATCC 700721 / MGH 78578).